A 131-amino-acid polypeptide reads, in one-letter code: Small ribosomal subunit protein uS8 (131 aa).

It belongs to the universal ribosomal protein uS8 family. As to quaternary structure, part of the 30S ribosomal subunit. Contacts proteins S5 and S12.

One of the primary rRNA binding proteins, it binds directly to 16S rRNA central domain where it helps coordinate assembly of the platform of the 30S subunit. This chain is Small ribosomal subunit protein uS8, found in Legionella pneumophila (strain Paris).